Reading from the N-terminus, the 316-residue chain is 4-hydroxy-3-methylbut-2-enyl diphosphate reductase (316 aa).

Residue cysteine 12 participates in [4Fe-4S] cluster binding. Histidine 41 and histidine 74 together coordinate (2E)-4-hydroxy-3-methylbut-2-enyl diphosphate. Residues histidine 41 and histidine 74 each contribute to the dimethylallyl diphosphate site. Positions 41 and 74 each coordinate isopentenyl diphosphate. Residue cysteine 96 coordinates [4Fe-4S] cluster. A (2E)-4-hydroxy-3-methylbut-2-enyl diphosphate-binding site is contributed by histidine 124. Histidine 124 contacts dimethylallyl diphosphate. Histidine 124 lines the isopentenyl diphosphate pocket. The active-site Proton donor is glutamate 126. Threonine 169 is a (2E)-4-hydroxy-3-methylbut-2-enyl diphosphate binding site. Cysteine 199 contacts [4Fe-4S] cluster. The (2E)-4-hydroxy-3-methylbut-2-enyl diphosphate site is built by serine 227, serine 228, asparagine 229, and serine 271. Dimethylallyl diphosphate contacts are provided by serine 227, serine 228, asparagine 229, and serine 271. The isopentenyl diphosphate site is built by serine 227, serine 228, asparagine 229, and serine 271.

The protein belongs to the IspH family. It depends on [4Fe-4S] cluster as a cofactor.

It catalyses the reaction isopentenyl diphosphate + 2 oxidized [2Fe-2S]-[ferredoxin] + H2O = (2E)-4-hydroxy-3-methylbut-2-enyl diphosphate + 2 reduced [2Fe-2S]-[ferredoxin] + 2 H(+). The catalysed reaction is dimethylallyl diphosphate + 2 oxidized [2Fe-2S]-[ferredoxin] + H2O = (2E)-4-hydroxy-3-methylbut-2-enyl diphosphate + 2 reduced [2Fe-2S]-[ferredoxin] + 2 H(+). It participates in isoprenoid biosynthesis; dimethylallyl diphosphate biosynthesis; dimethylallyl diphosphate from (2E)-4-hydroxy-3-methylbutenyl diphosphate: step 1/1. The protein operates within isoprenoid biosynthesis; isopentenyl diphosphate biosynthesis via DXP pathway; isopentenyl diphosphate from 1-deoxy-D-xylulose 5-phosphate: step 6/6. Functionally, catalyzes the conversion of 1-hydroxy-2-methyl-2-(E)-butenyl 4-diphosphate (HMBPP) into a mixture of isopentenyl diphosphate (IPP) and dimethylallyl diphosphate (DMAPP). Acts in the terminal step of the DOXP/MEP pathway for isoprenoid precursor biosynthesis. This Stenotrophomonas maltophilia (strain R551-3) protein is 4-hydroxy-3-methylbut-2-enyl diphosphate reductase.